Consider the following 687-residue polypeptide: Carboxysome assembly protein CcmM (687 aa).

The interval 242–327 is rbcS-like repeat 1, SSUL1; that stretch reads SINSDITNQI…RVVEVIIQRP (86 aa). Disordered stretches follow at residues 328-355 and 442-476; these read GDVP…SAVA and VHRP…SSAG. Residues 335–346 are compositionally biased toward polar residues; sequence SRGTTTTKALSS. The tract at residues 366–445 is rbcS-like repeat 2, SSUL2; it reads ANQLRALLHQ…RVAEIVVHRP (80 aa). Low complexity predominate over residues 451–472; it reads GKPSSSSSSVGYKSAPVSSAGG. The interval 480–562 is rbcS-like repeat 3, SSUL3; it reads PEVIATVRGL…RVLEQIIQRP (83 aa). A disordered region spans residues 565–590; sequence NVVAGRSPSSSSASTSSSASSNGFGS. Low complexity predominate over residues 568–587; sequence AGRSPSSSSASTSSSASSNG. A rbcS-like repeat 4, SSUL4 region spans residues 599–687; that stretch reads SAVRLDNSVV…RVLETIIQRP (89 aa).

It belongs to the gamma-class carbonic anhydrase family. Probably forms homotrimers. Full length CcmM interacts with CcaA, CcmK1, CcmK2, CcmK4, CcmL, CcmN and itself, while the N-terminus of CcmM (first 249 residues) only interacts with CcaA, CcmM and CcmN. A probable CcmM-CcaA-CcmN complex as well as a CcaA-RuBisCO-CcmM complex can also be isolated. Interacts with full-length CcaA and the first 220 residues of CcaA; surface residues Gln-177 to Gln-188 are responsible in part for binding. Multiple forms of the protein of 73 (full length), 62, 52 (the most predominant form) and 36 kDa are seen even in the presence of protease inhibitors. CcmM52 interacts with CcaA.

It is found in the carboxysome. Functionally, functions as a scaffold protein for the assembly of beta-carboxysomes, initiates carboxysome assembly via its N-terminal domain binding to CcaA, CcmK and CcmL. Binds HCO(3)-, suggesting it may play a role in the activity or regulation of bicarbonate dehydration. Also initiates carboxysome assembly by coalescing RuBisCO (ribulose bisphosphate carboxylase, rbcL-rbcS) via its SSU-like domains. Produced as a full-length and a shorter form; both forms are required for correct carboxysome assembly and growth. Despite its strong similarity to gamma-class carbonic anhydrase (CA) it does not have detectable CA activity. Beta-carboxysome assembly initiates when soluble RuBisCO is condensed into a liquid matrix in a pre-carboxysome by the RbcS-like domains of probably both forms of CcmM. CcmN interacts with the N-terminus of full length CcmM, and then recruits the shell proteins (CcmK) via CcmN's encapsulation peptide. CcmM73 also interacts with CcmK proteins and CcmL directly. Shell formation requires CcmK proteins and CcmO. CcmL caps the otherwise elongated carboxysome. Once fully encapsulated carboxysomes are formed, they migrate within the cell probably via interactions with the cytoskeleton. This chain is Carboxysome assembly protein CcmM, found in Synechocystis sp. (strain ATCC 27184 / PCC 6803 / Kazusa).